The chain runs to 133 residues: Type VI secretion amidase effector 2 protein (133 aa).

Catalysis depends on residues C23 and H73.

It belongs to the cell wall amidase Dae2/Tae2-like family.

It is found in the host periplasm. It localises to the secreted. It functions in the pathway cell wall degradation; peptidoglycan degradation. Toxic component of a contact-dependent interbacterial competition system (also called effector-immunity systems). Secreted by the SPI-6 type VI secretion system, probably into the periplasm of bacterial target cells. A cell wall amidase with specificity toward the D-meso-DAP-D-alanine bond (D-meso-diaminopimelic-D-alanine) found in peptidoglycan of Gram-negative bacteria. Toxicity is counteracted by a cognate immunity protein Tai2 (t2585), but not immunity proteins associated with a similar endopeptidase in other bacteria. In vitro degrades peptidoglycans from Gram-negative but not Gram-positive bacteria. The chain is Type VI secretion amidase effector 2 protein from Salmonella typhi.